A 136-amino-acid polypeptide reads, in one-letter code: uncharacterized protein (136 aa).

The protein localises to the cytoplasm. The protein resides in the nucleus. This is an uncharacterized protein from Schizosaccharomyces pombe (strain 972 / ATCC 24843) (Fission yeast).